Here is a 499-residue protein sequence, read N- to C-terminus: Alpha-L-arabinofuranosidase B (499 aa).

An N-terminal signal peptide occupies residues 1 to 18 (MFSRRNLVALGLAATVSA). N83 and N202 each carry an N-linked (GlcNAc...) asparagine glycan.

It belongs to the glycosyl hydrolase 54 family.

The catalysed reaction is Hydrolysis of terminal non-reducing alpha-L-arabinofuranoside residues in alpha-L-arabinosides.. It functions in the pathway glycan metabolism; L-arabinan degradation. Able to hydrolyze 1,5-, 1,3- and 1,2-alpha-linkages not only in L-arabinofuranosyl oligosaccharides, but also in polysac-charides containing terminal non-reducing L-arabinofuranoses in side chains, like L-arabinan, arabinogalactan and arabinoxylan. This is Alpha-L-arabinofuranosidase B (abfB) from Aspergillus niger.